A 298-amino-acid chain; its full sequence is Oxygen-dependent coproporphyrinogen-III oxidase (298 aa).

Residue serine 92 coordinates substrate. The a divalent metal cation site is built by histidine 96 and histidine 106. Histidine 106 acts as the Proton donor in catalysis. 108–110 is a binding site for substrate; that stretch reads NVR. Positions 145 and 175 each coordinate a divalent metal cation. The tract at residues 239–274 is important for dimerization; sequence YVEFNLVYDRGTLFGLQSGGRSESILMSLPPRVRWE. 257–259 provides a ligand contact to substrate; that stretch reads GGR.

It belongs to the aerobic coproporphyrinogen-III oxidase family. As to quaternary structure, homodimer. Requires a divalent metal cation as cofactor.

The protein localises to the cytoplasm. The catalysed reaction is coproporphyrinogen III + O2 + 2 H(+) = protoporphyrinogen IX + 2 CO2 + 2 H2O. It functions in the pathway porphyrin-containing compound metabolism; protoporphyrin-IX biosynthesis; protoporphyrinogen-IX from coproporphyrinogen-III (O2 route): step 1/1. In terms of biological role, involved in the heme biosynthesis. Catalyzes the aerobic oxidative decarboxylation of propionate groups of rings A and B of coproporphyrinogen-III to yield the vinyl groups in protoporphyrinogen-IX. The chain is Oxygen-dependent coproporphyrinogen-III oxidase from Stenotrophomonas maltophilia (strain R551-3).